The following is a 142-amino-acid chain: Galactose-6-phosphate isomerase subunit LacA (142 aa).

This sequence belongs to the LacAB/RpiB family. As to quaternary structure, heteromultimeric protein consisting of LacA and LacB.

It carries out the reaction aldehydo-D-galactose 6-phosphate = keto-D-tagatose 6-phosphate. It participates in carbohydrate metabolism; D-galactose 6-phosphate degradation; D-tagatose 6-phosphate from D-galactose 6-phosphate: step 1/1. The protein is Galactose-6-phosphate isomerase subunit LacA of Streptococcus mutans serotype c (strain ATCC 700610 / UA159).